We begin with the raw amino-acid sequence, 495 residues long: Probable histidine ammonia-lyase (495 aa).

The 5-imidazolinone (Ala-Gly) cross-link spans 141–143 (ASG). 2,3-didehydroalanine (Ser) is present on serine 142.

This sequence belongs to the PAL/histidase family. Contains an active site 4-methylidene-imidazol-5-one (MIO), which is formed autocatalytically by cyclization and dehydration of residues Ala-Ser-Gly.

It is found in the cytoplasm. It carries out the reaction L-histidine = trans-urocanate + NH4(+). It functions in the pathway amino-acid degradation; L-histidine degradation into L-glutamate; N-formimidoyl-L-glutamate from L-histidine: step 1/3. The protein is Probable histidine ammonia-lyase of Thermoplasma volcanium (strain ATCC 51530 / DSM 4299 / JCM 9571 / NBRC 15438 / GSS1).